The primary structure comprises 1469 residues: Accumulation-associated protein (1469 aa).

Positions 1-52 (MGKRRQGPINKKVDFLPNKLNKYSIRKFTVGTASILLGSTLIFGSSSHEAKA) are cleaved as a signal peptide. Disordered stretches follow at residues 52–164 (AAEE…SEPV), 486–511 (GIET…TPTT), and 528–1443 (EIKP…QANE). 2 stretches are compositionally biased toward polar residues: residues 75 to 94 (ENTN…STLQ) and 110 to 125 (KANS…SEAP). Residues 129–144 (DLARKEDIPAVSKNEE) are compositionally biased toward basic and acidic residues. Residues 145–164 (LQSSQPNTDSKIEPTTSEPV) show a composition bias toward polar residues. G5 domains follow at residues 446 to 528 (PKAV…GGEE), 574 to 656 (YGPV…GGEE), 702 to 784 (YGPV…GGEE), 830 to 912 (YGPV…GGEE), 958 to 1040 (YGPV…GGEE), 1086 to 1168 (YGPV…GGEQ), and 1211 to 1296 (VTKY…GPTK). Residues 489–500 (TTTTPTYVNPNT) are compositionally biased toward low complexity. Basic and acidic residues-rich tracts occupy residues 528–537 (EIKPGHKDEF) and 589–613 (PFDK…KGEP). Over residues 614–629 (GTKTITTPTTKNPLTG) the composition is skewed to low complexity. Basic and acidic residues-rich tracts occupy residues 631–646 (KVGE…KQPV) and 655–665 (EEIKPGHKDEF). Over residues 738 to 757 (KGEPGTKTITTPTTKNPLTG) the composition is skewed to low complexity. Composition is skewed to basic and acidic residues over residues 759 to 793 (KVGE…KDEF) and 845 to 869 (PFDK…KGEP). Positions 870 to 885 (GTKTITTPTTKNPLTG) are enriched in low complexity. The span at 887–921 (KVGEGEPTEKVTKQPVDEIVHYGGEEIKPGHKDEF) shows a compositional bias: basic and acidic residues. Residues 994–1013 (KGEPGTKTITTPTTKNPLTG) are compositionally biased toward low complexity. Positions 1015–1049 (KVGEGEPTEKITKQPVDEIVHYGGEEIKPGHKDEF) are enriched in basic and acidic residues. Positions 1122-1141 (KGEPGTKTITTPTTKNPLTG) are enriched in low complexity. Basic and acidic residues-rich tracts occupy residues 1143 to 1162 (KVGE…DEIV), 1229 to 1253 (PFDK…KGEP), and 1271 to 1286 (KVGE…KQPV). Positions 1409–1443 (TPTQSGAPEQPNRSMHSTDNKNQLPDTGENRQANE) are enriched in polar residues. The LPXTG sorting signal signature appears at 1432 to 1436 (LPDTG). The residue at position 1435 (Thr-1435) is a Pentaglycyl murein peptidoglycan amidated threonine. The propeptide at 1436–1469 (GENRQANEGTLVGSLLAIVGSLFIFGRRKKGNEK) is removed by sortase.

Its subcellular location is the secreted. It is found in the cell wall. The polypeptide is Accumulation-associated protein (Staphylococcus epidermidis (strain ATCC 12228 / FDA PCI 1200)).